The following is a 1458-amino-acid chain: Anaphase-promoting complex subunit 1 (1458 aa).

The segment at 186–210 (QSIKSSRNRRRESSFSREKNPDLTR) is disordered. Residues 196–210 (RESSFSREKNPDLTR) are compositionally biased toward basic and acidic residues. 4 PC repeats span residues 873 to 895 (GLLL…KLLS), 959 to 982 (AAGF…SDLK), 1006 to 1024 (GAIM…LEVA), and 1099 to 1124 (GICF…INFL).

Belongs to the APC1 family. As to quaternary structure, the APC/C is composed of at least 13 subunits: apc1, apc2, nuc2, apc4, apc5, cut9, apc8, apc10, apc11, hcn1, apc13, apc14 and apc15.

Its function is as follows. Component of the anaphase-promoting complex/cyclosome (APC/C), a cell cycle-regulated E3 ubiquitin-protein ligase complex that controls progression through mitosis and the G1 phase of the cell cycle. The APC/C is thought to confer substrate specificity and, in the presence of ubiquitin-conjugating E2 enzymes, it catalyzes the formation of protein-ubiquitin conjugates that are subsequently degraded by the 26S proteasome. Mutations to this protein prevent the exit from mitosis. In Schizosaccharomyces pombe (strain 972 / ATCC 24843) (Fission yeast), this protein is Anaphase-promoting complex subunit 1 (cut4).